The following is a 427-amino-acid chain: 3-phosphoshikimate 1-carboxyvinyltransferase (427 aa).

3-phosphoshikimate-binding residues include K22, S23, and R27. K22 is a binding site for phosphoenolpyruvate. Phosphoenolpyruvate is bound by residues G96 and R124. 3-phosphoshikimate-binding residues include S170, S171, Q172, S198, D313, N336, and K340. Residue Q172 coordinates phosphoenolpyruvate. The Proton acceptor role is filled by D313. R344, R386, and K411 together coordinate phosphoenolpyruvate.

This sequence belongs to the EPSP synthase family. Monomer.

It is found in the cytoplasm. The enzyme catalyses 3-phosphoshikimate + phosphoenolpyruvate = 5-O-(1-carboxyvinyl)-3-phosphoshikimate + phosphate. Its pathway is metabolic intermediate biosynthesis; chorismate biosynthesis; chorismate from D-erythrose 4-phosphate and phosphoenolpyruvate: step 6/7. Its function is as follows. Catalyzes the transfer of the enolpyruvyl moiety of phosphoenolpyruvate (PEP) to the 5-hydroxyl of shikimate-3-phosphate (S3P) to produce enolpyruvyl shikimate-3-phosphate and inorganic phosphate. This Aeromonas salmonicida (strain A449) protein is 3-phosphoshikimate 1-carboxyvinyltransferase.